A 172-amino-acid chain; its full sequence is Signal peptidase complex catalytic subunit SEC11 (172 aa).

At Met-1 to Gln-14 the chain is on the cytoplasmic side. The chain crosses the membrane as a helical; Signal-anchor for type II membrane protein span at residues Leu-15 to Ala-35. The Lumenal segment spans residues Thr-36–Glu-172. Active-site charge relay system residues include Ser-49, His-90, and Asp-115. Residues Val-158–Ile-169 are C-terminal short (CTS) helix.

The protein belongs to the peptidase S26B family. Component of the signal peptidase complex (SPC) composed of a catalytic subunit SEC11 and three accessory subunits SPC1, SPC2 and SPC3. The complex induces a local thinning of the ER membrane which is used to measure the length of the signal peptide (SP) h-region of protein substrates. This ensures the selectivity of the complex towards h-regions shorter than 18-20 amino acids. SPC associates with the translocon complex.

The protein localises to the endoplasmic reticulum membrane. It catalyses the reaction Cleavage of hydrophobic, N-terminal signal or leader sequences from secreted and periplasmic proteins.. In terms of biological role, catalytic component of the signal peptidase complex (SPC) which catalyzes the cleavage of N-terminal signal sequences from nascent proteins as they are translocated into the lumen of the endoplasmic reticulum. Specifically cleaves N-terminal signal peptides that contain a hydrophobic alpha-helix (h-region) shorter than 18-20 amino acids. This chain is Signal peptidase complex catalytic subunit SEC11 (SEC11), found in Metarhizium robertsii (strain ARSEF 23 / ATCC MYA-3075) (Metarhizium anisopliae (strain ARSEF 23)).